An 865-amino-acid chain; its full sequence is ABC transporter ATP-binding/permease protein Rv1747 (865 aa).

An FHA 1 domain is found at 29–78; the sequence is VVVGRDLRADVRVAHPLISRAHLLLRFDQGRWVAIDNGSLNGLYLNNRRV. Residues 104–205 form a disordered region; sequence GRHRGSAGRP…PAGARGGTEA (102 aa). The segment covering 135–156 has biased composition (low complexity); sequence PQTGTLGSGQLQQLPPATTRIP. Thr-152 is subject to Phosphothreonine. The span at 157 to 166 shows a compositional bias: pro residues; sequence AAPPSGPQPR. Thr-210 is subject to Phosphothreonine. Positions 230 to 279 constitute an FHA 2 domain; it reads VRIGRANDNDIVIPEVLASRHHATLVPTPGGTEIRDNRSINGTFVNGARV. The ABC transporter domain occupies 319-552; it reads LDVRGVTWTI…VMGTTNWADI (234 aa). 352 to 359 is a binding site for ATP; sequence GPSGAGKS. Residues 596–810 form the ABC transmembrane type-2 domain; sequence RQFSTIARRQ…TPARWGFAAS (215 aa). 6 helical membrane passes run 614–634, 652–672, 700–720, 740–760, 767–787, and 836–856; these read GYFV…MSVP, PGQI…ALTI, VCVY…IVLV, FVDV…LSAI, IMPL…GMIP, and SAWW…VGFV.

It in the central section; belongs to the ABC transporter superfamily. The protein in the C-terminal section; belongs to the ABC-2 integral membrane protein family. As to quaternary structure, homodimer. Interacts with PknF. In terms of processing, phosphorylated by PknF. Can probably be phosphorylated in vivo by other kinases when PknF is missing.

Its subcellular location is the cell membrane. With respect to regulation, function is positively regulated by phosphorylation. In terms of biological role, involved in the translocation of an unknown substrate across the membrane. Transmembrane domains (TMD) form a pore in the membrane and the ATP-binding domain (NBD) is responsible for energy generation. Required for virulence. The chain is ABC transporter ATP-binding/permease protein Rv1747 from Mycobacterium tuberculosis (strain ATCC 25618 / H37Rv).